The chain runs to 269 residues: AA9 family lytic polysaccharide monooxygenase I (269 aa).

The N-terminal stretch at 1–17 is a signal peptide; sequence MFSKKITALALVSAVKA. Histidine 18 and histidine 103 together coordinate Cu(2+). Residues cysteine 73 and cysteine 196 are joined by a disulfide bond. Asparagine 156 carries an N-linked (GlcNAc...) asparagine glycan. O2 is bound by residues histidine 182 and glutamine 191. Tyrosine 193 provides a ligand contact to Cu(2+).

Belongs to the polysaccharide monooxygenase AA9 family. Cu(2+) is required as a cofactor.

The protein localises to the secreted. The enzyme catalyses [(1-&gt;4)-beta-D-glucosyl]n+m + reduced acceptor + O2 = 4-dehydro-beta-D-glucosyl-[(1-&gt;4)-beta-D-glucosyl]n-1 + [(1-&gt;4)-beta-D-glucosyl]m + acceptor + H2O.. Its function is as follows. Lytic polysaccharide monooxygenase (LPMO) that depolymerizes crystalline and amorphous polysaccharides via the oxidation of scissile alpha- or beta-(1-4)-glycosidic bonds, yielding C1 and C4 oxidation products. Catalysis by LPMOs requires the reduction of the active-site copper from Cu(II) to Cu(I) by a reducing agent and H(2)O(2) or O(2) as a cosubstrate. In Botryotinia fuckeliana (strain B05.10) (Noble rot fungus), this protein is AA9 family lytic polysaccharide monooxygenase I.